The primary structure comprises 166 residues: Protein-export protein SecB (166 aa).

This sequence belongs to the SecB family. Homotetramer, a dimer of dimers. One homotetramer interacts with 1 SecA dimer.

It is found in the cytoplasm. In terms of biological role, one of the proteins required for the normal export of preproteins out of the cell cytoplasm. It is a molecular chaperone that binds to a subset of precursor proteins, maintaining them in a translocation-competent state. It also specifically binds to its receptor SecA. This chain is Protein-export protein SecB, found in Actinobacillus pleuropneumoniae serotype 5b (strain L20).